We begin with the raw amino-acid sequence, 746 residues long: Ribosome biogenesis protein BOP1 (746 aa).

The interval 1 to 116 (MAGSRGAGRT…PCPRTEMASA (116 aa)) is disordered. The segment covering 43–65 (SHSTGSDSGVSDSEESVFSGLED) has biased composition (low complexity). The segment covering 66 to 87 (SGSDSSEDDDEGDEEGEDGALD) has biased composition (acidic residues). Residues 88-99 (DEGHSGIKKTTE) show a composition bias toward basic and acidic residues. Phosphothreonine is present on T106. Y122 carries the phosphotyrosine modification. A phosphoserine mark is found at S126 and S127. Residues 265-427 (MGWIQPRRPR…CLSVSPGGQW (163 aa)) form a sufficient for nucleolar localization region. 7 WD repeats span residues 411–450 (GHSDLVRCLSVSPGGQWLVSGSDDGSLRLWEVATARCVRT), 452–492 (PVGG…RLVA), 532–576 (CHGK…SPFR), 577–615 (RSHGQVQRVAFHPARPFLLVASQRSVRLYHLLRQELTKK), 618–657 (PNCKWVSSLAVHPAGDNVICGSYDSKLVWFDLDLSTKPYR), 661–700 (HHKKALRAVAFHPRYPLFASGSDDGSVIVCHGMVYNDLLQ), and 716–746 (TRDLGVLDVIFHPTQPWVFSSGADGTVRLFT).

This sequence belongs to the WD repeat BOP1/ERB1 family. In terms of assembly, component of the PeBoW complex, composed of BOP1, PES1 and WDR12. The complex is held together by BOP1, which interacts with PES1 via its N-terminal domain and with WDR12 via a high-affinity interaction between the seven-bladed beta-propeller domains of the 2 proteins. The NOP7 complex associates with the 66S pre-ribosome. The PeBoW complex associates with DDX27, BOP1 interacts directly with DDX27.

It localises to the nucleus. The protein localises to the nucleolus. The protein resides in the nucleoplasm. Its function is as follows. Component of the PeBoW complex, which is required for maturation of 28S and 5.8S ribosomal RNAs and formation of the 60S ribosome. The polypeptide is Ribosome biogenesis protein BOP1 (Homo sapiens (Human)).